We begin with the raw amino-acid sequence, 448 residues long: Methionine aminopeptidase 2-1 (448 aa).

The tract at residues 1–90 (MAAQASEKLE…PPRVPVSSLF (90 aa)) is disordered. A compositionally biased stretch (low complexity) spans 22–33 (AAGPAKAGQADA). The segment covering 34-46 (GEVEDESDDDADD) has biased composition (acidic residues). A compositionally biased stretch (low complexity) spans 47 to 58 (AGAAADGAANGA). A compositionally biased stretch (basic residues) spans 59–74 (AKKKKKRKSKKKKKGG). The segment covering 75-88 (AKVQSSPPRVPVSS) has biased composition (low complexity). His198 is a binding site for substrate. 3 residues coordinate a divalent metal cation: Asp218, Asp229, and His301. His309 contacts substrate. The a divalent metal cation site is built by Glu334 and Glu429.

It belongs to the peptidase M24A family. Methionine aminopeptidase eukaryotic type 2 subfamily. Co(2+) is required as a cofactor. Requires Zn(2+) as cofactor. Mn(2+) serves as cofactor. The cofactor is Fe(2+).

It is found in the cytoplasm. It carries out the reaction Release of N-terminal amino acids, preferentially methionine, from peptides and arylamides.. In terms of biological role, cotranslationally removes the N-terminal methionine from nascent proteins. The N-terminal methionine is often cleaved when the second residue in the primary sequence is small and uncharged (Met-Ala-, Cys, Gly, Pro, Ser, Thr, or Val). The chain is Methionine aminopeptidase 2-1 from Emericella nidulans (strain FGSC A4 / ATCC 38163 / CBS 112.46 / NRRL 194 / M139) (Aspergillus nidulans).